The following is a 475-amino-acid chain: Crocetin glucosyltransferase 3 (475 aa).

H16 acts as the Proton acceptor in catalysis. An an anthocyanidin-binding site is contributed by H16. D123 (charge relay) is an active-site residue. UDP-alpha-D-glucose contacts are provided by T144, A354, Q356, H371, W374, N375, S376, and E379. A394 serves as a coordination point for an anthocyanidin. Positions 395 and 396 each coordinate UDP-alpha-D-glucose.

The protein belongs to the UDP-glycosyltransferase family. As to expression, mainly expressed in stamens.

The enzyme catalyses crocetin + UDP-alpha-D-glucose = beta-D-glucosyl crocetin + UDP. The catalysed reaction is beta-D-glucosyl crocetin + UDP-alpha-D-glucose = bis(beta-D-glucosyl) crocetin + UDP. It catalyses the reaction beta-D-gentiobiosyl crocetin + UDP-alpha-D-glucose = beta-D-gentiobiosyl beta-D-glucosyl crocetin + UDP. Its function is as follows. Crocetin glucosyltransferase involved in the synthesis of crocin, one of the apocarotenoids responsible for the color and bitter taste of saffron. This is Crocetin glucosyltransferase 3 (GLT3) from Crocus sativus (Saffron).